Here is a 552-residue protein sequence, read N- to C-terminus: Cation/acetate symporter ActP (552 aa).

Helical transmembrane passes span 6-26 (LLAVLALLLSGPVVAADAIAG), 35-55 (MEAIVMFLIFVAMTLGITYWA), 78-98 (GLAMAGDFMSAASFLGISALV), 103-123 (FDGLIYSLGFLVGWPIILFLI), 151-171 (LSACGSLVVVALYLIAQMVGA), 185-205 (VAVVLVGILMVMYVLFGGMLA), 208-228 (WVQIIKAVLLLFGASFMAIMV), 264-284 (ISALSLGLGLMFGTAGLPHIL), 305-325 (GLMGYFYFLTFIIGFGAILLV), 357-377 (LFLGFISAVAFATILAVVAGL), 407-427 (VSKITVVALGVVAILLGILFE), 431-451 (IAFMVGLAFSIAASCNFPIIL), 467-487 (GGWLGLLTAVILMILGPTIWV), and 496-516 (IFPYEYPALFSMLVAFIGTWL).

It belongs to the sodium:solute symporter (SSF) (TC 2.A.21) family.

The protein resides in the cell inner membrane. Functionally, transports acetate. The polypeptide is Cation/acetate symporter ActP (Erwinia tasmaniensis (strain DSM 17950 / CFBP 7177 / CIP 109463 / NCPPB 4357 / Et1/99)).